The following is a 261-amino-acid chain: Glucose 1-dehydrogenase (261 aa).

Residue 11–35 (VITGSSTGLGKSMAIRFATEKAKVV) coordinates NADP(+). Position 145 (Ser145) interacts with substrate. Residue Tyr158 is the Proton acceptor of the active site.

The protein belongs to the short-chain dehydrogenases/reductases (SDR) family. Homotetramer.

It catalyses the reaction D-glucose + NAD(+) = D-glucono-1,5-lactone + NADH + H(+). The enzyme catalyses D-glucose + NADP(+) = D-glucono-1,5-lactone + NADPH + H(+). The polypeptide is Glucose 1-dehydrogenase (Priestia megaterium (Bacillus megaterium)).